A 1039-amino-acid polypeptide reads, in one-letter code: Multidrug resistance protein MdtB (1039 aa).

A run of 11 helical transmembrane segments spans residues 15-37 (LFIM…GIIG), 345-362 (FELM…YLFL), 367-389 (ATII…MVFL), 396-418 (LTLM…VIEN), 438-460 (GEIG…PLLF), 472-494 (FAIT…TPMM), 535-557 (HPWL…WVFI), 866-888 (VWLI…ESFI), 908-930 (LMIA…IGIV), 967-989 (ILMT…GVGA), and 999-1021 (MVGG…YLLF).

The protein belongs to the resistance-nodulation-cell division (RND) (TC 2.A.6) family. MdtB subfamily. In terms of assembly, part of a tripartite efflux system composed of MdtA, MdtB and MdtC. MdtB forms a heteromultimer with MdtC.

The protein localises to the cell inner membrane. The sequence is that of Multidrug resistance protein MdtB from Shigella flexneri.